We begin with the raw amino-acid sequence, 174 residues long: Small ribosomal subunit protein uS5 (174 aa).

The S5 DRBM domain occupies 17-80 (WQERVVQIRR…ADGKKHLIDV (64 aa)).

Belongs to the universal ribosomal protein uS5 family. Part of the 30S ribosomal subunit. Contacts proteins S4 and S8.

In terms of biological role, with S4 and S12 plays an important role in translational accuracy. Functionally, located at the back of the 30S subunit body where it stabilizes the conformation of the head with respect to the body. In Thermosynechococcus vestitus (strain NIES-2133 / IAM M-273 / BP-1), this protein is Small ribosomal subunit protein uS5.